The primary structure comprises 524 residues: Excitatory amino acid transporter 3 (524 aa).

The Cytoplasmic portion of the chain corresponds to methionine 1–asparagine 18. Residues tryptophan 19–valine 38 traverse the membrane as a helical segment. Topologically, residues arginine 39–arginine 61 are extracellular. A helical membrane pass occupies residues methionine 62–leucine 82. Residues aspartate 83 to arginine 93 are Cytoplasmic-facing. A helical transmembrane segment spans residues alanine 94–valine 114. Na(+) contacts are provided by tyrosine 98, threonine 101, and threonine 102. At serine 115–methionine 205 the chain is on the extracellular side. N-linked (GlcNAc...) asparagine glycosylation is found at asparagine 178 and asparagine 195. A helical membrane pass occupies residues tyrosine 206 to lysine 229. The Cytoplasmic portion of the chain corresponds to tryptophan 230–aspartate 238. Residues phenylalanine 239–isoleucine 266 form a helical membrane-spanning segment. Residues alanine 267–methionine 286 are Extracellular-facing. The helical transmembrane segment at alanine 287 to isoleucine 308 threads the bilayer. Residues valine 309–proline 313 lie on the Cytoplasmic side of the membrane. An intramembrane region (discontinuously helical) is located at residues phenylalanine 314 to alanine 344. 2 residues coordinate L-aspartate: serine 331 and serine 333. The Cytoplasmic segment spans residues glutamate 345–arginine 353. A helical transmembrane segment spans residues isoleucine 354–phenylalanine 380. The Na(+) site is built by glycine 362, threonine 364, asparagine 366, and aspartate 368. Threonine 370 is a binding site for L-aspartate. Residues isoleucine 381–glutamine 393 lie on the Extracellular side of the membrane. An intramembrane region (discontinuously helical) is located at residues isoleucine 394–glycine 427. Na(+) is bound by residues serine 405, isoleucine 406, and alanine 408. An L-aspartate-binding site is contributed by valine 411. Residues leucine 428–aspartate 440 are Extracellular-facing. A helical transmembrane segment spans residues tryptophan 441–valine 462. Positions 447, 448, and 451 each coordinate L-aspartate. Residues asparagine 451 and aspartate 455 each contribute to the Na(+) site. Residues glutamate 463–phenylalanine 524 lie on the Cytoplasmic side of the membrane. A phosphoserine mark is found at serine 517 and serine 522.

This sequence belongs to the dicarboxylate/amino acid:cation symporter (DAACS) (TC 2.A.23) family. SLC1A1 subfamily. As to quaternary structure, homotrimer. Interacts with ARL6IP5. Interacts with RTN2 (via N-terminus); the interaction promotes cell surface expression of SLC1A1. Interacts with SORCS2; this interaction is important for normal expression at the cell membrane.

The protein localises to the cell membrane. It localises to the apical cell membrane. It is found in the synapse. Its subcellular location is the synaptosome. The protein resides in the early endosome membrane. The protein localises to the late endosome membrane. It localises to the recycling endosome membrane. It catalyses the reaction K(+)(in) + L-glutamate(out) + 3 Na(+)(out) + H(+)(out) = K(+)(out) + L-glutamate(in) + 3 Na(+)(in) + H(+)(in). It carries out the reaction K(+)(in) + L-aspartate(out) + 3 Na(+)(out) + H(+)(out) = K(+)(out) + L-aspartate(in) + 3 Na(+)(in) + H(+)(in). The catalysed reaction is D-aspartate(out) + K(+)(in) + 3 Na(+)(out) + H(+)(out) = D-aspartate(in) + K(+)(out) + 3 Na(+)(in) + H(+)(in). The enzyme catalyses K(+)(in) + L-cysteine(out) + 3 Na(+)(out) + H(+)(out) = K(+)(out) + L-cysteine(in) + 3 Na(+)(in) + H(+)(in). Its function is as follows. Sodium-dependent, high-affinity amino acid transporter that mediates the uptake of L-glutamate and also L-aspartate and D-aspartate. Can also transport L-cysteine. Functions as a symporter that transports one amino acid molecule together with two or three Na(+) ions and one proton, in parallel with the counter-transport of one K(+) ion. Mediates Cl(-) flux that is not coupled to amino acid transport; this avoids the accumulation of negative charges due to aspartate and Na(+) symport. Plays an important role in L-glutamate and L-aspartate reabsorption in renal tubuli. Plays a redundant role in the rapid removal of released glutamate from the synaptic cleft, which is essential for terminating the postsynaptic action of glutamate. Contributes to glutathione biosynthesis and protection against oxidative stress via its role in L-glutamate and L-cysteine transport. Negatively regulated by ARL6IP5. This Bos taurus (Bovine) protein is Excitatory amino acid transporter 3 (SLC1A1).